Reading from the N-terminus, the 577-residue chain is Isocitrate dehydrogenase kinase/phosphatase (577 aa).

ATP-binding positions include 315–321 (APGIRGM) and lysine 336. Residue aspartate 371 is part of the active site.

The protein belongs to the AceK family.

It localises to the cytoplasm. The catalysed reaction is L-seryl-[isocitrate dehydrogenase] + ATP = O-phospho-L-seryl-[isocitrate dehydrogenase] + ADP + H(+). Functionally, bifunctional enzyme which can phosphorylate or dephosphorylate isocitrate dehydrogenase (IDH) on a specific serine residue. This is a regulatory mechanism which enables bacteria to bypass the Krebs cycle via the glyoxylate shunt in response to the source of carbon. When bacteria are grown on glucose, IDH is fully active and unphosphorylated, but when grown on acetate or ethanol, the activity of IDH declines drastically concomitant with its phosphorylation. The polypeptide is Isocitrate dehydrogenase kinase/phosphatase (Escherichia fergusonii (strain ATCC 35469 / DSM 13698 / CCUG 18766 / IAM 14443 / JCM 21226 / LMG 7866 / NBRC 102419 / NCTC 12128 / CDC 0568-73)).